The following is a 532-amino-acid chain: Chromobox protein homolog 2 (532 aa).

Residues 1–66 are involved in the interaction with H3C15 and H3C1; it reads MEELSSVGEQ…AFQKKEHEKE (66 aa). A Chromo domain is found at 12-70; sequence FAAECILSKRLRKGKLEYLVKWRGWSSKHNSWEPEENILDPRLLLAFQKKEHEKEVQNR. The segment covering 60 to 69 has biased composition (basic and acidic residues); sequence KKEHEKEVQN. Residues 60 to 204 form a disordered region; the sequence is KKEHEKEVQN…APASKLPPPL (145 aa). Residues 70–82 are compositionally biased toward basic residues; sequence RKRGKRPRGRPRK. The a.T hook DNA-binding region spans 75-87; that stretch reads RPRGRPRKLTAMS. The span at 103–119 shows a compositional bias: low complexity; sequence KSKSSSSSSSSTSSSSS. Basic and acidic residues predominate over residues 128–140; it reads LDAKRGPRGRETH. Residues Lys-146 and Lys-153 each participate in a glycyl lysine isopeptide (Lys-Gly) (interchain with G-Cter in SUMO2) cross-link. The short motif at 163 to 168 is the Nuclear localization signal element; the sequence is KRGRKP. Position 247 is an asymmetric dimethylarginine; alternate (Arg-247). Omega-N-methylarginine; alternate is present on Arg-247. 2 disordered regions span residues 296–348 and 379–493; these read KGEL…PAPT and KGVP…SQDW. Phosphoserine is present on Ser-302. Over residues 464–478 the composition is skewed to low complexity; sequence SSSSDSDPDSASPPS. Residues 479–493 are compositionally biased toward polar residues; that stretch reads TGQNPSVSVQTSQDW.

Component of a PRC1-like complex. The composition of the PRC1 complex may differ between the PRC1 complex in pluripotent embryonic stem cells containing RNF2, CBX7 and PCGF2, and the PRC1 complex in differentiating cells containing RNF2, CBX2, CBX4 and BMI1. May interact with H3C15, H3C1 and RNF2. Interacts (via chromodomain) with histone H3K9Me3 and H3K27me3.

The protein localises to the nucleus. It is found in the chromosome. Component of a Polycomb group (PcG) multiprotein PRC1-like complex, a complex class required to maintain the transcriptionally repressive state of many genes, including Hox genes, throughout development. PcG PRC1 complex acts via chromatin remodeling and modification of histones; it mediates monoubiquitination of histone H2A 'Lys-119', rendering chromatin heritably changed in its expressibility. Binds to histone H3 trimethylated at 'Lys-9' (H3K9me3) or at 'Lys-27' (H3K27me3). Plays a role in the lineage differentiation of the germ layers in embryonic development. Involved in sexual development, acting as activator of NR5A1 expression. The sequence is that of Chromobox protein homolog 2 (CBX2) from Homo sapiens (Human).